Here is a 118-residue protein sequence, read N- to C-terminus: MIVGHGIDLQDISAIEKVYLRNARFARKVLTDKELALFEQFSHHRKMTYLAGRWAGKEAFSKAMGTGIGQLTFQDIEIINDSKGRPVITKSPFQGKAFISISHSGGYVQASVILEDLA.

Mg(2+) is bound by residues aspartate 8 and glutamate 58.

This sequence belongs to the P-Pant transferase superfamily. AcpS family. The cofactor is Mg(2+).

Its subcellular location is the cytoplasm. The catalysed reaction is apo-[ACP] + CoA = holo-[ACP] + adenosine 3',5'-bisphosphate + H(+). Functionally, transfers the 4'-phosphopantetheine moiety from coenzyme A to a Ser of acyl-carrier-protein. The sequence is that of Holo-[acyl-carrier-protein] synthase from Streptococcus equi subsp. zooepidemicus (strain H70).